The primary structure comprises 298 residues: Protease HtpX (298 aa).

2 consecutive transmembrane segments (helical) span residues 4 to 24 and 38 to 58; these read IGLF…TMNL and LGNL…VSLA. His-145 is a binding site for Zn(2+). Residue Glu-146 is part of the active site. His-149 lines the Zn(2+) pocket. 2 helical membrane passes run 160–180 and 194–214; these read LLQG…AYVV and ITFI…ASMI. Glu-223 is a Zn(2+) binding site.

This sequence belongs to the peptidase M48B family. Zn(2+) is required as a cofactor.

It localises to the cell inner membrane. This chain is Protease HtpX, found in Hydrogenovibrio crunogenus (strain DSM 25203 / XCL-2) (Thiomicrospira crunogena).